The following is a 172-amino-acid chain: MKKKSIKDKEQENNWEEKVVQVKRVTKVVKGGKKLSFRAILIVGNEKGEIGVGIGKASDVIGAVKKGVTDAKKHIINVPLTKSYSIPHPIEGISGAAKVILRPSAIGSGVIAGGSTRTVLELAGVKNILAKQLRSSNTLNNARAVLNALSQLRTFQNTAQNRDINIERLFNM.

Positions W15–V78 constitute an S5 DRBM domain.

The protein belongs to the universal ribosomal protein uS5 family. Part of the 30S ribosomal subunit. Contacts protein S4.

It localises to the plastid. The protein localises to the chloroplast. In terms of biological role, with S4 and S12 plays an important role in translational accuracy. This chain is Small ribosomal subunit protein uS5c (rps5), found in Gracilaria tenuistipitata var. liui (Red alga).